Consider the following 266-residue polypeptide: Shikimate dehydrogenase (NADP(+)) (266 aa).

Residues 14 to 16 (SLS) and threonine 61 contribute to the shikimate site. The active-site Proton acceptor is lysine 65. Shikimate-binding residues include asparagine 85 and aspartate 100. NADP(+)-binding positions include 124 to 128 (GAGGA) and alanine 210. Tyrosine 212 is a binding site for shikimate. Glycine 233 contacts NADP(+).

Belongs to the shikimate dehydrogenase family. In terms of assembly, homodimer.

The enzyme catalyses shikimate + NADP(+) = 3-dehydroshikimate + NADPH + H(+). Its pathway is metabolic intermediate biosynthesis; chorismate biosynthesis; chorismate from D-erythrose 4-phosphate and phosphoenolpyruvate: step 4/7. Its function is as follows. Involved in the biosynthesis of the chorismate, which leads to the biosynthesis of aromatic amino acids. Catalyzes the reversible NADPH linked reduction of 3-dehydroshikimate (DHSA) to yield shikimate (SA). In Halobacterium salinarum (strain ATCC 29341 / DSM 671 / R1), this protein is Shikimate dehydrogenase (NADP(+)).